Reading from the N-terminus, the 154-residue chain is NADPH-dependent 7-cyano-7-deazaguanine reductase (154 aa).

The span at 1 to 13 shows a compositional bias: polar residues; it reads MSVTDVSGLSQLG. Residues 1–30 are disordered; that stretch reads MSVTDVSGLSQLGTKVDTPESPEKAVLEKV. The span at 17–27 shows a compositional bias: basic and acidic residues; the sequence is DTPESPEKAVL. Cysteine 52 (thioimide intermediate) is an active-site residue. Aspartate 59 serves as the catalytic Proton donor. Substrate contacts are provided by residues 74-76 and 93-94; these read VES and HE.

It belongs to the GTP cyclohydrolase I family. QueF type 1 subfamily.

It is found in the cytoplasm. The enzyme catalyses 7-aminomethyl-7-carbaguanine + 2 NADP(+) = 7-cyano-7-deazaguanine + 2 NADPH + 3 H(+). The protein operates within tRNA modification; tRNA-queuosine biosynthesis. Its function is as follows. Catalyzes the NADPH-dependent reduction of 7-cyano-7-deazaguanine (preQ0) to 7-aminomethyl-7-deazaguanine (preQ1). The sequence is that of NADPH-dependent 7-cyano-7-deazaguanine reductase from Agrobacterium fabrum (strain C58 / ATCC 33970) (Agrobacterium tumefaciens (strain C58)).